Consider the following 43-residue polypeptide: Neurotrophin-4 (43 aa).

The protein belongs to the NGF-beta family.

NT-4 could play a role in oogenesis and/or early embryogenesis. NT-4 interacts with the low affinity NGF receptor and elicits neurite outgrowth from explanted dorsal root ganglia with no and lower activity in sympathetic and nodose ganglia, respectively. In Macrovipera lebetinus (Levantine viper), this protein is Neurotrophin-4 (NTF4).